We begin with the raw amino-acid sequence, 173 residues long: Pathogenesis-related protein 1C (173 aa).

The first 20 residues, 1-20, serve as a signal peptide directing secretion; sequence MSTSAVLFLLLAVFAAGASA.

The protein belongs to the thaumatin family.

The protein is Pathogenesis-related protein 1C of Hordeum vulgare (Barley).